The primary structure comprises 9702 residues: Nonribosomal peptide synthetase ungA (9702 aa).

Residues 248-647 (EQAQLRPHAP…ARKDTQVKIR (400 aa)) are adenylation 1. Residues 775 to 852 (APQTEMEYRL…MARAAQEKQT (78 aa)) enclose the Carrier 1 domain. S812 carries the post-translational modification O-(pantetheine 4'-phosphoryl)serine. The interval 891-1288 (DILPCTPLQE…EAVLRHVCSQ (398 aa)) is condensation 1. Residues 1330 to 1730 (QRTQQQPDAP…GRKDTQVKIR (401 aa)) form an adenylation 2 region. The Carrier 2 domain maps to 1857–1933 (LPQSPMEKSL…RLARREIQTD (77 aa)). S1894 is modified (O-(pantetheine 4'-phosphoryl)serine). The interval 1946–2374 (PFALSPIQQF…ERALEGTAVQ (429 aa)) is epimerization 1. A condensation 2 region spans residues 2414-2842 (EDIYPCSPLQ…LDTAILSPQD (429 aa)). The interval 2868-3267 (QVERQPDALA…GRKDTQVKIR (400 aa)) is adenylation 3. The Carrier 3 domain occupies 3397 to 3473 (APTTEMERHL…EMSQVAKLGS (77 aa)). The residue at position 3434 (S3434) is an O-(pantetheine 4'-phosphoryl)serine. The segment at 3512 to 3920 (EDVFPCTPLQ…LLCDASHHQS (409 aa)) is condensation 3. The segment at 3957–4361 (KQTQRRSAAQ…GRKDAQVKIR (405 aa)) is adenylation 4. One can recognise a Carrier 4 domain in the interval 4491–4568 (PPTTDLERQI…LALSVSAAVD (78 aa)). Residue S4528 is modified to O-(pantetheine 4'-phosphoryl)serine. Residues 4583 to 5013 (ALSPIQQMFA…QAAAQALPLL (431 aa)) form an epimerization 2 region. Positions 5049-5474 (VEDIYPCSPL…ANIISHQDLE (426 aa)) are condensation 4. The adenylation 5 stretch occupies residues 5496 to 5899 (MQQAESQPGA…GRKDNQVKIH (404 aa)). Residues 6033–6110 (TASSPEELEL…LVSHAQGNTA (78 aa)) enclose the Carrier 5 domain. At S6070 the chain carries O-(pantetheine 4'-phosphoryl)serine. Residues 6127 to 6551 (ELSPIQQLFF…CKSSLEAAAA (425 aa)) form an epimerization 3 region. The condensation 5 stretch occupies residues 6593-6935 (VEDIYPCAPI…TGISVQGGAA (343 aa)). Positions 7047 to 7447 (KRPDAPAIDA…GRRDNQVKVR (401 aa)) are adenylation 6. The Carrier 6 domain occupies 7575 to 7655 (GPQTEVERLL…RSARTVQGHV (81 aa)). Residue S7613 is modified to O-(pantetheine 4'-phosphoryl)serine. The interval 7670 to 8106 (DLAPVQQMFA…LVTASELLMQ (437 aa)) is epimerization 4. The interval 8144–8588 (VEDIYPCSPI…EVDLSTDHDQ (445 aa)) is condensation 6. The tract at residues 8612–9025 (NTVQKQPHST…GRKDSQVKIR (414 aa)) is adenylation 7. The 79-residue stretch at 9158–9236 (SPTAPMERRL…LALLVREGDA (79 aa)) folds into the Carrier 7 domain. S9196 carries the post-translational modification O-(pantetheine 4'-phosphoryl)serine. The interval 9282–9629 (DVYPTTDLQN…DNLEHDPGTA (348 aa)) is condensation 7.

Belongs to the NRP synthetase family.

It participates in secondary metabolite biosynthesis. Nonribosomal peptide synthetase; part of the gene cluster that mediates the biosynthesis of the unguisins, gamma-aminobutyric acid (GABA)-containing fungal cyclic heptapeptides with the amino acid sequence cyclo-(D-Ala1-D-Val2-L-Phe3-D-Val4-D-Ala5-D-Trp6-GABA7) for unguisin A and cyclo-(D-Ala1-D-Val2-L-Leu3-D-Val4-D-Ala5-D-Trp6-GABA7) for unguisin B. UngA is the main enzyme within the cluster which condenses the 7 residues using its respective 7 modules. The terminal condensation domain (Ct) is involved in cyclization with D-alanine and thereby releasing of unguisins A and B. The alanine racemase ungC provides D-alanine, which is then accepted by the first adenylation domain of ungA. Finally, the hydrolase ungD catalyzes the hydrolysis between the D-tryptophan and GABA residues of unguisins A and B to produce the corresponding linear peptides. The polypeptide is Nonribosomal peptide synthetase ungA (Aspergillus violaceofuscus (strain CBS 115571)).